The sequence spans 182 residues: Small ribosomal subunit protein uS9 (182 aa).

This sequence belongs to the universal ribosomal protein uS9 family.

This chain is Small ribosomal subunit protein uS9, found in Corynebacterium efficiens (strain DSM 44549 / YS-314 / AJ 12310 / JCM 11189 / NBRC 100395).